A 90-amino-acid chain; its full sequence is Large ribosomal subunit protein eL37 (90 aa).

Residues Cys19, Cys22, Cys34, and Cys37 each contribute to the Zn(2+) site. A C4-type zinc finger spans residues 19–37; the sequence is CRRCGRQSYHKQKNSCSSC. Basic residues predominate over residues 21–31; it reads RCGRQSYHKQK. Residues 21 to 59 are disordered; that stretch reads RCGRQSYHKQKNSCSSCGYPNPKMRNPGSIKARRRRTIG.

It belongs to the eukaryotic ribosomal protein eL37 family. Zn(2+) serves as cofactor.

Its function is as follows. Binds to the 23S rRNA. The chain is Large ribosomal subunit protein eL37 (RPL37) from Encephalitozoon cuniculi (strain GB-M1) (Microsporidian parasite).